A 470-amino-acid chain; its full sequence is Ribulose bisphosphate carboxylase large chain (470 aa).

Substrate is bound by residues asparagine 115 and threonine 165. Catalysis depends on lysine 167, which acts as the Proton acceptor. Lysine 169 is a binding site for substrate. Mg(2+) is bound by residues lysine 193, aspartate 195, and glutamate 196. Lysine 193 carries the N6-carboxylysine modification. The active-site Proton acceptor is histidine 286. Substrate contacts are provided by arginine 287, histidine 319, and serine 371.

It belongs to the RuBisCO large chain family. Type I subfamily. In terms of assembly, heterohexadecamer of 8 large chains and 8 small chains. The cofactor is Mg(2+).

It is found in the carboxysome. It carries out the reaction 2 (2R)-3-phosphoglycerate + 2 H(+) = D-ribulose 1,5-bisphosphate + CO2 + H2O. The catalysed reaction is D-ribulose 1,5-bisphosphate + O2 = 2-phosphoglycolate + (2R)-3-phosphoglycerate + 2 H(+). In terms of biological role, ruBisCO catalyzes two reactions: the carboxylation of D-ribulose 1,5-bisphosphate, the primary event in carbon dioxide fixation, as well as the oxidative fragmentation of the pentose substrate in the photorespiration process. Both reactions occur simultaneously and in competition at the same active site. The sequence is that of Ribulose bisphosphate carboxylase large chain from Prochlorococcus marinus (strain SARG / CCMP1375 / SS120).